The following is a 653-amino-acid chain: Thioredoxin domain-containing protein 3 homolog (653 aa).

The region spanning 9-114 (LQETLNTQEA…QETIQETLKN (106 aa)) is the Thioredoxin domain. Cysteines 38 and 41 form a disulfide. The interval 155 to 299 (KQITVALIKP…FFFPDFKPPT (145 aa)) is NDK 1. Positions 300-323 (YRSAKSAASRASGRRSKTPSQKPR) are disordered. Over residues 301 to 310 (RSAKSAASRA) the composition is skewed to low complexity. 2 NDK regions span residues 324–459 (LQRT…IFHV) and 459–597 (VEQT…QFDW). Residues 603 to 653 (QAEEGEVNETSGEQPTDEQSGETEKTEEDGEHEGAQSDQQQAVSEAMEKEE) form a disordered region. Over residues 617–633 (PTDEQSGETEKTEEDGE) the composition is skewed to acidic residues.

The protein in the C-terminal section; belongs to the NDK family. Testis-specific.

In terms of biological role, may be required during the final stages of sperm tail maturation. May act by reducing disulfide bonds within the sperm components. This Ciona intestinalis (Transparent sea squirt) protein is Thioredoxin domain-containing protein 3 homolog (CiIC3).